A 229-amino-acid polypeptide reads, in one-letter code: Urease accessory protein UreF (229 aa).

The protein belongs to the UreF family. In terms of assembly, ureD, UreF and UreG form a complex that acts as a GTP-hydrolysis-dependent molecular chaperone, activating the urease apoprotein by helping to assemble the nickel containing metallocenter of UreC. The UreE protein probably delivers the nickel.

It is found in the cytoplasm. In terms of biological role, required for maturation of urease via the functional incorporation of the urease nickel metallocenter. This Methylobacterium radiotolerans (strain ATCC 27329 / DSM 1819 / JCM 2831 / NBRC 15690 / NCIMB 10815 / 0-1) protein is Urease accessory protein UreF.